Reading from the N-terminus, the 843-residue chain is Taste receptor type 1 member 2 (843 aa).

The first 19 residues, 1–19 (MGPQARTLCLLSLLLHVLP), serve as a signal peptide directing secretion. The Extracellular segment spans residues 20-570 (KPGKLVENSD…TFLEWHEVPT (551 aa)). Asn87, Asn296, Asn316, Asn355, Asn372, Asn432, Asn484, Asn491, and Asn531 each carry an N-linked (GlcNAc...) asparagine glycan. A helical membrane pass occupies residues 571 to 591 (IVVAILAALGFFSTLAILFIF). Residues 592-606 (WRHFQTPMVRSAGGP) are Cytoplasmic-facing. A helical membrane pass occupies residues 607–627 (MCFLMLVPLLLAFGMVPVYVG). The Extracellular segment spans residues 628–642 (PPTVFSCFCRQAFFT). Residues 643 to 663 (VCFSICLSCITVRSFQIVCVF) form a helical membrane-spanning segment. The Cytoplasmic segment spans residues 664–682 (KMARRLPSAYSFWMRYHGP). The chain crosses the membrane as a helical span at residues 683–703 (YVFVAFITAIKVALVVGNMLA). Residues 704–731 (TTINPIGRTDPDDPNIMILSCHPNYRNG) lie on the Extracellular side of the membrane. The chain crosses the membrane as a helical span at residues 732 to 752 (LLFNTSMDLLLSVLGFSFAYM). Over 753–764 (GKELPTNYNEAK) the chain is Cytoplasmic. Residues 765–785 (FITLSMTFSFTSSISLCTFMS) traverse the membrane as a helical segment. Residues 786–789 (VHDG) lie on the Extracellular side of the membrane. A helical membrane pass occupies residues 790–810 (VLVTIMDLLVTVLNFLAIGLG). Topologically, residues 811–843 (YFGPKCYMILFYPERNTSAYFNSMIQGYTMRKS) are cytoplasmic.

Belongs to the G-protein coupled receptor 3 family. TAS1R subfamily. In terms of assembly, forms heterodimers with TAS1R3. Abundantly expressed in circumvallate and foliate papillae.

Its subcellular location is the cell membrane. Putative taste receptor. TAS1R2/TAS1R3 recognizes diverse natural and synthetic sweeteners. In Rattus norvegicus (Rat), this protein is Taste receptor type 1 member 2 (Tas1r2).